We begin with the raw amino-acid sequence, 488 residues long: Katanin p60 ATPase-containing subunit A-like 1 (488 aa).

N-acetylmethionine is present on Met1. The tract at residues 95–179 (DPAVWPPPVP…GASDSEIPKF (85 aa)) is disordered. Basic and acidic residues predominate over residues 116 to 127 (PNREVRPLRKDV). Positions 128 to 138 (GAGARGLVGRA) are enriched in low complexity. Residues 142–167 (SKSDKPASRDKDYRARGRDDKARKNV) show a composition bias toward basic and acidic residues. Ser172 is modified (phosphoserine). An ATP-binding site is contributed by 246 to 253 (GPPGTGKT).

It belongs to the AAA ATPase family. Katanin p60 subunit A1 subfamily. A-like 1 sub-subfamily. In terms of assembly, interacts with KATNB1 and KATNBL1. Widely expressed, including in testis, brain, heart, lung, kidney, liver, spleen, seminal vesicles and ovary. In testis, restricted to Sertoli cells within the seminiferous epithelium (at protein level).

It is found in the cytoplasm. Its subcellular location is the cytoskeleton. The protein resides in the spindle pole. The protein localises to the spindle. It catalyses the reaction n ATP + n H2O + a microtubule = n ADP + n phosphate + (n+1) alpha/beta tubulin heterodimers.. Regulates microtubule dynamics in Sertoli cells, a process that is essential for spermiogenesis and male fertility. Severs microtubules in an ATP-dependent manner, promoting rapid reorganization of cellular microtubule arrays. Has microtubule-severing activity in vitro. This chain is Katanin p60 ATPase-containing subunit A-like 1 (Katnal1), found in Mus musculus (Mouse).